The chain runs to 439 residues: Hemagglutinin-esterase (439 aa).

A signal peptide spans 1–22; the sequence is MGCMCIAMAPRTLLLLIGCQLV. The segment at 12–132 is esterase domain 1; sequence TLLLLIGCQL…DNKRWMGNKA (121 aa). At 23–407 the chain is on the virion surface side; that stretch reads FGFNEPLNIV…PVCIYDPLPV (385 aa). The active-site Nucleophile is S45. A disulfide bridge links C49 with C70. N94, N152, N196, N246, N309, and N316 each carry an N-linked (GlcNAc...) asparagine; by host glycan. An intrachain disulfide couples C118 to C167. The interval 133–281 is receptor binding; that stretch reads RFYARVYEKM…GNYKAVSLEY (149 aa). Cystine bridges form between C202–C291 and C210–C264. The esterase domain 2 stretch occupies residues 282–395; sequence LLSLPSKAIC…HCPTAANIGY (114 aa). A disulfide bridge connects residues C322 and C327. N331 carries N-linked (GlcNAc...) asparagine; by host glycosylation. Catalysis depends on charge relay system residues D342 and H345. 2 N-linked (GlcNAc...) asparagine; by host glycosylation sites follow: N360 and N374. A disulfide bond links C363 and C387. Residues 408–428 form a helical membrane-spanning segment; sequence ILLGVLLGIAVLIIVFLMFYF. Topologically, residues 429–439 are intravirion; sequence MTDSGVRLHEA.

It belongs to the influenza type C/coronaviruses hemagglutinin-esterase family. As to quaternary structure, homodimer; disulfide-linked. Forms a complex with the M protein in the pre-Golgi. Associates then with S-M complex to form a ternary complex S-M-HE. Post-translationally, N-glycosylated in the host RER.

It is found in the virion membrane. The protein localises to the host cell membrane. The catalysed reaction is N-acetyl-9-O-acetylneuraminate + H2O = N-acetylneuraminate + acetate + H(+). It catalyses the reaction N-acetyl-4-O-acetylneuraminate + H2O = N-acetylneuraminate + acetate + H(+). Its function is as follows. Structural protein that makes short spikes at the surface of the virus. Contains receptor binding and receptor-destroying activities. Mediates de-O-acetylation of N-acetyl-4-O-acetylneuraminic acid, which is probably the receptor determinant recognized by the virus on the surface of erythrocytes and susceptible cells. This receptor-destroying activity is important for virus release as it probably helps preventing self-aggregation and ensures the efficient spread of the progeny virus from cell to cell. May serve as a secondary viral attachment protein for initiating infection, the spike protein being the major one. May become a target for both the humoral and the cellular branches of the immune system. The sequence is that of Hemagglutinin-esterase from Murine coronavirus (strain S) (MHV-S).